An 804-amino-acid polypeptide reads, in one-letter code: Leucine--tRNA ligase (804 aa).

The 'HIGH' region signature appears at 39 to 50; the sequence is PFPSGKGLHVGH. The 'KMSKS' region signature appears at 573–577; that stretch reads KMSKS. Lys576 contacts ATP.

It belongs to the class-I aminoacyl-tRNA synthetase family.

It localises to the cytoplasm. It catalyses the reaction tRNA(Leu) + L-leucine + ATP = L-leucyl-tRNA(Leu) + AMP + diphosphate. This is Leucine--tRNA ligase from Lactobacillus gasseri (strain ATCC 33323 / DSM 20243 / BCRC 14619 / CIP 102991 / JCM 1131 / KCTC 3163 / NCIMB 11718 / NCTC 13722 / AM63).